The chain runs to 243 residues: Proteasome subunit beta 1 (243 aa).

The segment covering 1 to 14 has biased composition (polar residues); it reads MRAPQHNSDFSRTV. A disordered region spans residues 1–34; the sequence is MRAPQHNSDFSRTVDQLADDPNPYEPEIGSMPQN. Positions 1 to 48 are cleaved as a propeptide — removed in mature form; by autocatalysis; sequence MRAPQHNSDFSRTVDQLADDPNPYEPEIGSMPQNDLTRADLDNVNKTG. Thr-49 (nucleophile) is an active-site residue.

It belongs to the peptidase T1B family. The 20S proteasome core is composed of 14 alpha and 14 beta subunits that assemble into four stacked heptameric rings, resulting in a barrel-shaped structure. The two inner rings, each composed of seven catalytic beta subunits, are sandwiched by two outer rings, each composed of seven alpha subunits. The catalytic chamber with the active sites is on the inside of the barrel. Has a gated structure, the ends of the cylinder being occluded by the N-termini of the alpha-subunits. Is capped at one or both ends by the proteasome regulatory ATPase, PAN.

The protein localises to the cytoplasm. The catalysed reaction is Cleavage of peptide bonds with very broad specificity.. The formation of the proteasomal ATPase PAN-20S proteasome complex, via the docking of the C-termini of PAN into the intersubunit pockets in the alpha-rings, triggers opening of the gate for substrate entry. Interconversion between the open-gate and close-gate conformations leads to a dynamic regulation of the 20S proteasome proteolysis activity. Its function is as follows. Component of the proteasome core, a large protease complex with broad specificity involved in protein degradation. In Haloterrigena turkmenica (strain ATCC 51198 / DSM 5511 / JCM 9101 / NCIMB 13204 / VKM B-1734 / 4k) (Halococcus turkmenicus), this protein is Proteasome subunit beta 1.